We begin with the raw amino-acid sequence, 478 residues long: Endoplasmic reticulum oxidoreductin-1 (478 aa).

Residues 1–20 (MREPLLQLIVLSLIIIVVNT) form the signal peptide. 6 disulfide bridges follow: cysteine 28–cysteine 41, cysteine 30–cysteine 39, cysteine 79–cysteine 384, cysteine 88–cysteine 93, cysteine 209–cysteine 230, and cysteine 387–cysteine 390. A disordered region spans residues 117–143 (AAVKEEEDDDAEKCADAGNNIDPMDRT). FAD contacts are provided by arginine 188, threonine 190, and tryptophan 201. FAD-binding residues include serine 241, histidine 244, arginine 283, and arginine 295. Residue asparagine 377 is glycosylated (N-linked (GlcNAc...) asparagine). The disordered stretch occupies residues 459-478 (ESVMNTAADGPPRKSNKIDL).

This sequence belongs to the EROs family. In terms of assembly, may function both as a monomer and a homodimer. FAD serves as cofactor.

Its subcellular location is the endoplasmic reticulum membrane. Functionally, oxidoreductase involved in disulfide bond formation in the endoplasmic reticulum. Efficiently reoxidizes pdi-1, the enzyme catalyzing protein disulfide formation, in order to allow pdi-1 to sustain additional rounds of disulfide formation. Following pdi reoxidation, passes its electrons to molecular oxygen via FAD, leading to the production of reactive oxygen species (ROS) in the cell. The protein is Endoplasmic reticulum oxidoreductin-1 (ero-1) of Caenorhabditis elegans.